A 401-amino-acid chain; its full sequence is Large ribosomal subunit protein uL3 (401 aa).

The disordered stretch occupies residues 1-22 (MSHRKFSAPRHGHMGFTPKKRS).

This sequence belongs to the universal ribosomal protein uL3 family.

The protein localises to the cytoplasm. Functionally, the L3 protein is a component of the large subunit of cytoplasmic ribosomes. The chain is Large ribosomal subunit protein uL3 (rpl-3) from Caenorhabditis elegans.